Consider the following 575-residue polypeptide: 3-hydroxy-3-methylglutaryl-coenzyme A reductase 1 (575 aa).

The span at 1–13 (MDTTGRLHHRKHA) shows a compositional bias: basic residues. The interval 1 to 25 (MDTTGRLHHRKHATPVEDRSPTTPK) is disordered. Transmembrane regions (helical) follow at residues 29 to 49 (ALPLPLYLTNAVFFTLFFSVA) and 73 to 93 (EIVAIVSLIASFIYLLGFFGI). The segment at 97–160 (QSFIARASHD…PLIAPLVSEE (64 aa)) is linker. N-linked (GlcNAc...) asparagine glycosylation is present at Asn-132. Positions 161 to 575 (DEMIVNSVVD…SSKDMSKAAS (415 aa)) are catalytic. Glu-254 serves as the catalytic Charge relay system. Asn-318 carries an N-linked (GlcNAc...) asparagine glycan. Residues Lys-386 and Asp-462 each act as charge relay system in the active site. Residues 531 to 551 (LLAAIVAGSVLAGELSLMSAI) traverse the membrane as a helical segment. The active-site Proton donor is the His-560. N-linked (GlcNAc...) asparagine glycosylation occurs at Asn-564.

This sequence belongs to the HMG-CoA reductase family.

The protein resides in the endoplasmic reticulum membrane. It is found in the mitochondrion membrane. It localises to the plastid membrane. It carries out the reaction (R)-mevalonate + 2 NADP(+) + CoA = (3S)-3-hydroxy-3-methylglutaryl-CoA + 2 NADPH + 2 H(+). It functions in the pathway metabolic intermediate biosynthesis; (R)-mevalonate biosynthesis; (R)-mevalonate from acetyl-CoA: step 3/3. Catalyzes the synthesis of mevalonate. The specific precursor of all isoprenoid compounds present in plants. In Hevea brasiliensis (Para rubber tree), this protein is 3-hydroxy-3-methylglutaryl-coenzyme A reductase 1 (HMGR1).